The chain runs to 177 residues: Large ribosomal subunit protein uL6 (177 aa).

It belongs to the universal ribosomal protein uL6 family. As to quaternary structure, part of the 50S ribosomal subunit.

In terms of biological role, this protein binds to the 23S rRNA, and is important in its secondary structure. It is located near the subunit interface in the base of the L7/L12 stalk, and near the tRNA binding site of the peptidyltransferase center. The protein is Large ribosomal subunit protein uL6 of Rickettsia peacockii (strain Rustic).